We begin with the raw amino-acid sequence, 719 residues long: MIYGYTEKELEKTDPDGWRLIVEDTGRQRWKYLKTEEERRERPQTYMEKYFLGKNMDLPEQPAAKTPIESARKGFSFYKHLQTSDGNWACEYGGVMFLLPGLIIAMYISKIEFPDEMRIEVIRYLVNHANPEDGGWGIHIEGKSTVFGTALNYVVLRILGLGPDHPVTMKARIRLNELGGAIGCPQWGKFWLAVLNCYGWEGINPILPEFWMLPEWLPIHPSRWWVHTRAVYLPMGYIYGEKFTAPVDPLIESLREELYTQPYSSINFSKHRNTTSPVDVYVPHTRFLRVINSILTFYHTIFRFSWIKDMASKYAYKLIEYENKNTDFLCIGPVNFSIHILAVYWKEGPDSYAFKSHKERMADFLWISKKGMMMNGTNGVQLWDTSFAVQALVESGLAEDPEFKDHMIKALDFLDKCQIQKNCDDQQKCYRHRRKGAWPFSTRQQGYTVSDCTAEALKAVLLLQNLKSFPKRVSYDRLKDSVDVILSLQNKDGGFASYELIRGPSWLEFINPAEVFGDIMIEHSYPECTTAAVTALCYFRSLCSHYRGPEINKSVKNAIQFIKESQRPDGSWYESWAICFTYATMFALESLSCVKDFYENSFHSRRACDFLVNKQEEDGGWSEGYQSCTDGIWTRHPTGSQVVQTAWACIGLMYANYPDETPIKRGINLIMSRQQPNGEWKQEAIEGVFNKNCMISYPNYKFNFTIKALGMYSKRYGNI.

One copy of the PFTB 1 repeat lies at 118 to 160; that stretch reads RIEVIRYLVNHANPEDGGWGIHIEGKSTVFGTALNYVVLRILG. Aspartate 451 (proton donor) is an active-site residue. PFTB repeat units follow at residues 478–523, 555–595, and 604–645; these read LKDS…MIEH, VKNA…SCVK, and SRRA…VVQT.

The protein belongs to the terpene cyclase/mutase family.

It carries out the reaction (S)-2,3-epoxysqualene = lanosterol. It participates in terpene metabolism; lanosterol biosynthesis; lanosterol from farnesyl diphosphate: step 3/3. Its function is as follows. Catalyzes the cyclization of (S)-2,3 oxidosqualene to lanosterol, a reaction that forms the sterol nucleus. The protein is Lanosterol synthase (ERG7) of Pneumocystis carinii.